A 263-amino-acid chain; its full sequence is MLRFAVLGHPVAHSLSPAMHAFALESLGLEGSYEAWDTPLEALPGRLKEVRRAFRGVNLTLPLKEAALAHLDWVSPEAQRIGAVNTVLQVEGRLFGFNTDAPGFLEALKAGGIPLKGPALVLGAGGAGRAVAFALREAGLEVWVWNRTPQRALALAEEFGLRAVPLEKAREARLLVNATRVGLEDPSASPLPAELLPEEGAVVDLVYRPLWTRFLREAQERGLKVQTGLPMLAWQGALAFRLWTGLLPDPSGMEEAARRALGV.

Shikimate-binding positions include 14–16 (SLS) and T60. Catalysis depends on K64, which acts as the Proton acceptor. Residues N85 and D100 each coordinate shikimate. NADP(+) contacts are provided by residues 123–127 (GAGGA), 146–151 (NRTPQR), and L205. Y207 serves as a coordination point for shikimate. G228 lines the NADP(+) pocket.

The protein belongs to the shikimate dehydrogenase family. Homodimer.

It carries out the reaction shikimate + NADP(+) = 3-dehydroshikimate + NADPH + H(+). Its pathway is metabolic intermediate biosynthesis; chorismate biosynthesis; chorismate from D-erythrose 4-phosphate and phosphoenolpyruvate: step 4/7. Functionally, involved in the biosynthesis of the chorismate, which leads to the biosynthesis of aromatic amino acids. Catalyzes the reversible NADPH linked reduction of 3-dehydroshikimate (DHSA) to yield shikimate (SA). This chain is Shikimate dehydrogenase (NADP(+)), found in Thermus thermophilus (strain ATCC BAA-163 / DSM 7039 / HB27).